The sequence spans 348 residues: Protein RecA (348 aa).

65 to 72 (GPESSGKT) lines the ATP pocket. The tract at residues 326-348 (QMGSESLSSSSDDDDIKEESGEE) is disordered. The span at 336–348 (SDDDDIKEESGEE) shows a compositional bias: acidic residues.

This sequence belongs to the RecA family.

Its subcellular location is the cytoplasm. Can catalyze the hydrolysis of ATP in the presence of single-stranded DNA, the ATP-dependent uptake of single-stranded DNA by duplex DNA, and the ATP-dependent hybridization of homologous single-stranded DNAs. It interacts with LexA causing its activation and leading to its autocatalytic cleavage. In Campylobacter hominis (strain ATCC BAA-381 / DSM 21671 / CCUG 45161 / LMG 19568 / NCTC 13146 / CH001A), this protein is Protein RecA.